A 170-amino-acid chain; its full sequence is MPTKTIKIMVEGGSAKPGPPLGPTLSQLGLNVQEVVKKINDVTAQFKGMSVPVTIEIDSSTKKYDIKVGVPTTTSLLLKAINAQEPSGDPAHKKIGNLDLEQIADIAIKKKPQLSAKTLTAAIKSLLGTARSIGITVEGKDPKDVIKEIDQGKYNDLLTNYEQKWNEAEG.

Belongs to the universal ribosomal protein uL11 family. In terms of assembly, part of the ribosomal stalk of the 50S ribosomal subunit. Interacts with L10 and the large rRNA to form the base of the stalk. L10 forms an elongated spine to which L12 dimers bind in a sequential fashion forming a multimeric L10(L12)X complex.

Forms part of the ribosomal stalk which helps the ribosome interact with GTP-bound translation factors. This is Large ribosomal subunit protein uL11 from Sulfolobus acidocaldarius (strain ATCC 33909 / DSM 639 / JCM 8929 / NBRC 15157 / NCIMB 11770).